The chain runs to 1447 residues: Regulator of G-protein signaling 12 (1447 aa).

The interval 1–21 is disordered; it reads MFRAGEASKRPLPGPSPPRVR. The PDZ domain maps to 22–98; that stretch reads SVEVARGRAG…GVLHMVIAEG (77 aa). 2 positions are modified to phosphoserine: S172 and S195. Residue K196 forms a Glycyl lysine isopeptide (Lys-Gly) (interchain with G-Cter in SUMO2) linkage. A PID domain is found at 228-340; sequence VAMIVGYLGS…GALRTSCHVF (113 aa). Disordered stretches follow at residues 410–429 and 443–482; these read ADAHQNNSTSSNSDSGIGNF and LGGSSSRHGPGGSAWDGVGGRGAQPWGAPWTGPFCPDPEG. Residues 413–425 show a composition bias toward polar residues; sequence HQNNSTSSNSDSG. Positions 451–464 are enriched in gly residues; sequence GPGGSAWDGVGGRG. 2 positions are modified to omega-N-methylarginine: R524 and R633. The disordered stretch occupies residues 618–652; it reads NVRKTKEDKKGSKFGRGTGLTQPSQRTSARRSFGR. S661 and S671 each carry phosphoserine. The RGS domain maps to 715-832; sequence SFERLLQDPV…LKSPLYQECI (118 aa). The segment covering 843–853 has biased composition (polar residues); it reads DSQQVPSSPAS. A disordered region spans residues 843-941; sequence DSQQVPSSPA…RESQGSVSSA (99 aa). Phosphoserine occurs at positions 850 and 879. Residues 914–923 show a composition bias toward basic and acidic residues; it reads EHGDHADDAL. S943 is subject to Phosphoserine. 2 consecutive RBD domains span residues 962–1032 and 1034–1104; these read KHCC…LEKR and LFRL…LEEK. Over residues 1103–1117 the composition is skewed to basic and acidic residues; the sequence is EKDPSRGKASADKQK. A disordered region spans residues 1103–1169; the sequence is EKDPSRGKAS…RDPRLSKREE (67 aa). Polar residues predominate over residues 1122 to 1136; it reads KQNTAVNSSSRNHSA. Residues 1151-1169 are compositionally biased toward basic and acidic residues; that stretch reads IKGENGKNARDPRLSKREE. In terms of domain architecture, GoLoco spans 1187 to 1209; it reads AEEFFELISKAQSNRADDQRGLL. The tract at residues 1240–1447 is disordered; the sequence is GFSKRSATGN…KTSAHHATFV (208 aa). The segment covering 1244 to 1258 has biased composition (polar residues); that stretch reads RSATGNGRESASQPG. Low complexity-rich tracts occupy residues 1267 to 1280 and 1289 to 1298; these read SSDSPSTSPGSASS and PPGQKSPSGP. Positions 1301–1313 are enriched in polar residues; the sequence is TPQSPVSLAQEGT.

Interacts with GNAI1. Interacts with GNAI2 and GNAI3; the interactions are GDP-dependent. In terms of tissue distribution, isoform 3 is brain specific.

The protein localises to the nucleus. The protein resides in the cytoplasm. It localises to the cell projection. Its subcellular location is the dendrite. It is found in the synapse. The protein localises to the nucleus matrix. Functionally, regulates G protein-coupled receptor signaling cascades. Inhibits signal transduction by increasing the GTPase activity of G protein alpha subunits, thereby driving them into their inactive GDP-bound form. Its function is as follows. Behaves as a cell cycle-dependent transcriptional repressor, promoting inhibition of S-phase DNA synthesis. This Homo sapiens (Human) protein is Regulator of G-protein signaling 12 (RGS12).